The following is a 254-amino-acid chain: Nickel import ATP-binding protein NikD (254 aa).

The ABC transporter domain maps to Pro2–Val241. ATP is bound at residue Gly36–Ser43.

This sequence belongs to the ABC transporter superfamily. Nickel importer (TC 3.A.1.5.3) family. In terms of assembly, the complex is composed of two ATP-binding proteins (NikD and NikE), two transmembrane proteins (NikB and NikC) and a solute-binding protein (NikA).

It is found in the cell inner membrane. The catalysed reaction is Ni(2+)(out) + ATP + H2O = Ni(2+)(in) + ADP + phosphate + H(+). In terms of biological role, part of the ABC transporter complex NikABCDE involved in nickel import. Responsible for energy coupling to the transport system. The polypeptide is Nickel import ATP-binding protein NikD (Escherichia coli (strain K12)).